A 392-amino-acid chain; its full sequence is Sugar efflux transporter A (392 aa).

Residues 1–10 (MIWIMTMARR) lie on the Cytoplasmic side of the membrane. Residues 11–31 (MNGVYAAFMLVAFMMGVAGAL) traverse the membrane as a helical segment. Over 32–48 (QAPTLSLFLSREVGAQP) the chain is Periplasmic. Residues 49 to 69 (FWIGLFYTVNAIAGIGVSLWL) traverse the membrane as a helical segment. The Cytoplasmic segment spans residues 70–81 (AKRSDSQGDRRK). Residues 82–102 (LIIFCCLMAIGNALLFAFNRH) traverse the membrane as a helical segment. Topologically, residues 103–106 (YLTL) are periplasmic. Residues 107–127 (ITCGVLLASLANTAMPQLFAL) traverse the membrane as a helical segment. The Cytoplasmic segment spans residues 128–149 (AREYADNSAREVVMFSSVMRAQ). A helical transmembrane segment spans residues 150–170 (LSLAWVIGPPLAFMLALNYGF). A topological domain (periplasmic) is located at residue Thr171. A helical membrane pass occupies residues 172 to 192 (VMFSIAAGIFTLSLVLIAFML). Residues 193–219 (PSVARVELPSENALSMQGGWQDSNVRM) are Cytoplasmic-facing. Residues 220 to 240 (LFVASTLMWTCNTMYIIDMPL) form a helical membrane-spanning segment. Residues 241-251 (WISSELGLPDK) lie on the Periplasmic side of the membrane. A helical membrane pass occupies residues 252–272 (LAGFLMGTAAGLEIPAMILAG). Topologically, residues 273–282 (YYVKRYGKRR) are cytoplasmic. The chain crosses the membrane as a helical span at residues 283–303 (MMVIAVAAGVLFYTGLIFFNS). Residues 304–308 (RMALM) lie on the Periplasmic side of the membrane. Residues 309 to 329 (TLQLFNAVFIGIVAGIGMLWF) form a helical membrane-spanning segment. Topologically, residues 330–342 (QDLMPGRAGAATT) are cytoplasmic. A helical membrane pass occupies residues 343 to 363 (LFTNSISTGVILAGVIQGAIA). The Periplasmic portion of the chain corresponds to 364–365 (QS). Residues 366–386 (WGHFAVYWVIAVISVVALFLT) traverse the membrane as a helical segment. At 387–392 (AKVKDV) the chain is on the cytoplasmic side.

Belongs to the major facilitator superfamily. Set transporter family.

Its subcellular location is the cell inner membrane. Its function is as follows. Involved in the efflux of sugars. The physiological role may be the detoxification of non-metabolizable sugar analogs. Can transport IPTG, lactose and glucose. Has broad substrate specificity, with preferences for glucosides or galactosides with alkyl or aryl substituents. This Escherichia coli (strain K12) protein is Sugar efflux transporter A (setA).